The sequence spans 211 residues: NADH-quinone oxidoreductase subunit C (211 aa).

Belongs to the complex I 30 kDa subunit family. In terms of assembly, NDH-1 is composed of 14 different subunits. Subunits NuoB, C, D, E, F, and G constitute the peripheral sector of the complex.

The protein localises to the cell inner membrane. It catalyses the reaction a quinone + NADH + 5 H(+)(in) = a quinol + NAD(+) + 4 H(+)(out). Functionally, NDH-1 shuttles electrons from NADH, via FMN and iron-sulfur (Fe-S) centers, to quinones in the respiratory chain. The immediate electron acceptor for the enzyme in this species is believed to be ubiquinone. Couples the redox reaction to proton translocation (for every two electrons transferred, four hydrogen ions are translocated across the cytoplasmic membrane), and thus conserves the redox energy in a proton gradient. The polypeptide is NADH-quinone oxidoreductase subunit C (Azorhizobium caulinodans (strain ATCC 43989 / DSM 5975 / JCM 20966 / LMG 6465 / NBRC 14845 / NCIMB 13405 / ORS 571)).